The following is a 111-amino-acid chain: Small ribosomal subunit protein uS17 (111 aa).

It belongs to the universal ribosomal protein uS17 family. Part of the 30S ribosomal subunit.

One of the primary rRNA binding proteins, it binds specifically to the 5'-end of 16S ribosomal RNA. This is Small ribosomal subunit protein uS17 from Methanocella arvoryzae (strain DSM 22066 / NBRC 105507 / MRE50).